A 550-amino-acid polypeptide reads, in one-letter code: Zorya protein ZorA (550 aa).

Helical transmembrane passes span 16-36, 52-72, and 92-112; these read TLIT…AWWC, LMGA…LLNF, and FITS…DAFF.

Belongs to the MotA family.

The protein localises to the cell inner membrane. In terms of biological role, component of antiviral defense system Zorya type II, composed of ZorA, ZorB and ZorE. Expression of Zorya type II in E.coli (strain MG1655) confers resistance to phages SECphi7 and T7. While most T7 infected Zorya-containing cells undergo abortive infection, a minority produce viable phage progeny. These eventually accumulate to a high multiplicity of infection, leading to culture collapse by 170 minutes after initial infection. ZorA and ZorB probably assemble in the cell inner membrane and exert their effect there. The protein is Zorya protein ZorA of Escherichia coli (strain ATCC 8739 / DSM 1576 / NBRC 3972 / NCIMB 8545 / WDCM 00012 / Crooks).